A 168-amino-acid polypeptide reads, in one-letter code: Crossover junction endodeoxyribonuclease RuvC (168 aa).

Active-site residues include Asp-9, Glu-69, and Asp-141. 3 residues coordinate Mg(2+): Asp-9, Glu-69, and Asp-141.

This sequence belongs to the RuvC family. As to quaternary structure, homodimer which binds Holliday junction (HJ) DNA. The HJ becomes 2-fold symmetrical on binding to RuvC with unstacked arms; it has a different conformation from HJ DNA in complex with RuvA. In the full resolvosome a probable DNA-RuvA(4)-RuvB(12)-RuvC(2) complex forms which resolves the HJ. Mg(2+) is required as a cofactor.

The protein localises to the cytoplasm. It catalyses the reaction Endonucleolytic cleavage at a junction such as a reciprocal single-stranded crossover between two homologous DNA duplexes (Holliday junction).. The RuvA-RuvB-RuvC complex processes Holliday junction (HJ) DNA during genetic recombination and DNA repair. Endonuclease that resolves HJ intermediates. Cleaves cruciform DNA by making single-stranded nicks across the HJ at symmetrical positions within the homologous arms, yielding a 5'-phosphate and a 3'-hydroxyl group; requires a central core of homology in the junction. The consensus cleavage sequence is 5'-(A/T)TT(C/G)-3'. Cleavage occurs on the 3'-side of the TT dinucleotide at the point of strand exchange. HJ branch migration catalyzed by RuvA-RuvB allows RuvC to scan DNA until it finds its consensus sequence, where it cleaves and resolves the cruciform DNA. This chain is Crossover junction endodeoxyribonuclease RuvC, found in Bdellovibrio bacteriovorus (strain ATCC 15356 / DSM 50701 / NCIMB 9529 / HD100).